We begin with the raw amino-acid sequence, 193 residues long: Protein GrpE (193 aa).

Residues 1 to 22 (MDPKEKEKMAEELNVEETKDTA) show a composition bias toward basic and acidic residues. The segment at 1-45 (MDPKEKEKMAEELNVEETKDTAEEQPQDDQAEEAAPLTHEEQLEK) is disordered. The segment covering 23–32 (EEQPQDDQAE) has biased composition (acidic residues).

Belongs to the GrpE family. As to quaternary structure, homodimer.

The protein resides in the cytoplasm. Participates actively in the response to hyperosmotic and heat shock by preventing the aggregation of stress-denatured proteins, in association with DnaK and GrpE. It is the nucleotide exchange factor for DnaK and may function as a thermosensor. Unfolded proteins bind initially to DnaJ; upon interaction with the DnaJ-bound protein, DnaK hydrolyzes its bound ATP, resulting in the formation of a stable complex. GrpE releases ADP from DnaK; ATP binding to DnaK triggers the release of the substrate protein, thus completing the reaction cycle. Several rounds of ATP-dependent interactions between DnaJ, DnaK and GrpE are required for fully efficient folding. This is Protein GrpE from Bacteroides thetaiotaomicron (strain ATCC 29148 / DSM 2079 / JCM 5827 / CCUG 10774 / NCTC 10582 / VPI-5482 / E50).